The following is a 443-amino-acid chain: 23S rRNA (uracil(1939)-C(5))-methyltransferase RlmD (443 aa).

The region spanning 4–66 (QNRFDRTSFQ…RHFDEARVVE (63 aa)) is the TRAM domain. The [4Fe-4S] cluster site is built by C79, C85, C88, and C167. 6 residues coordinate S-adenosyl-L-methionine: Q275, F304, N309, E325, D352, and D373. Catalysis depends on C399, which acts as the Nucleophile.

This sequence belongs to the class I-like SAM-binding methyltransferase superfamily. RNA M5U methyltransferase family. RlmD subfamily.

The enzyme catalyses uridine(1939) in 23S rRNA + S-adenosyl-L-methionine = 5-methyluridine(1939) in 23S rRNA + S-adenosyl-L-homocysteine + H(+). Its function is as follows. Catalyzes the formation of 5-methyl-uridine at position 1939 (m5U1939) in 23S rRNA. In Xylella fastidiosa (strain Temecula1 / ATCC 700964), this protein is 23S rRNA (uracil(1939)-C(5))-methyltransferase RlmD.